The sequence spans 182 residues: Inner membrane assembly complex subunit 17 (182 aa).

The transit peptide at 1–45 directs the protein to the mitochondrion; the sequence is MLKRRSNALITLSRTKLFPITTVAYYHRRLLNQQRRAVSTSPKKE. The Mitochondrial matrix portion of the chain corresponds to 46–107; the sequence is IKSLEDLANL…EIPVKRFIRP (62 aa). Residues 108–127 traverse the membrane as a helical segment; it reads LWMFILMGSSVYLLLHFSWW. Residues 128-158 are a coiled coil; it reads KLEHEERESQLKKEVEILEHQLNELIVQDKT. Over 128–182 the chain is Mitochondrial intermembrane; sequence KLEHEERESQLKKEVEILEHQLNELIVQDKTHNTSRGKGSNESTHMKPWYRRWFW.

This sequence belongs to the INA17 family. As to quaternary structure, component of the inner membrane assembly (INA) complex, composed of INA17 and INA22. Interacts with a subset of F(1)F(0)-ATP synthase subunits of the F(1)-domain and the peripheral stalk.

Its subcellular location is the mitochondrion inner membrane. Component of the INA complex (INAC) that promotes the biogenesis of mitochondrial F(1)F(0)-ATP synthase. INAC facilitates the assembly of the peripheral stalk and promotes the assembly of the catalytic F(1)-domain with the membrane-embedded F(0)-domain. This chain is Inner membrane assembly complex subunit 17, found in Saccharomyces cerevisiae (strain RM11-1a) (Baker's yeast).